The following is a 125-amino-acid chain: Holo-[acyl-carrier-protein] synthase (125 aa).

The Mg(2+) site is built by D8 and E57.

Belongs to the P-Pant transferase superfamily. AcpS family. Mg(2+) is required as a cofactor.

It localises to the cytoplasm. It catalyses the reaction apo-[ACP] + CoA = holo-[ACP] + adenosine 3',5'-bisphosphate + H(+). Its function is as follows. Transfers the 4'-phosphopantetheine moiety from coenzyme A to a Ser of acyl-carrier-protein. This chain is Holo-[acyl-carrier-protein] synthase, found in Neisseria meningitidis serogroup A / serotype 4A (strain DSM 15465 / Z2491).